A 406-amino-acid polypeptide reads, in one-letter code: Formate-dependent phosphoribosylglycinamide formyltransferase (406 aa).

Residues 27–28 and Glu87 each bind N(1)-(5-phospho-beta-D-ribosyl)glycinamide; that span reads EL. Residues Arg120, Lys162, 167–172, 202–205, and Glu210 contribute to the ATP site; these read SSGKGQ and EGFI. Residues 125 to 320 form the ATP-grasp domain; that stretch reads RLAAETLGLP…EFELHARALL (196 aa). Mg(2+) contacts are provided by Glu279 and Glu291. N(1)-(5-phospho-beta-D-ribosyl)glycinamide contacts are provided by residues Asp298, Lys367, and 374 to 375; that span reads RR.

This sequence belongs to the PurK/PurT family. As to quaternary structure, homodimer.

The enzyme catalyses N(1)-(5-phospho-beta-D-ribosyl)glycinamide + formate + ATP = N(2)-formyl-N(1)-(5-phospho-beta-D-ribosyl)glycinamide + ADP + phosphate + H(+). The protein operates within purine metabolism; IMP biosynthesis via de novo pathway; N(2)-formyl-N(1)-(5-phospho-D-ribosyl)glycinamide from N(1)-(5-phospho-D-ribosyl)glycinamide (formate route): step 1/1. Its function is as follows. Involved in the de novo purine biosynthesis. Catalyzes the transfer of formate to 5-phospho-ribosyl-glycinamide (GAR), producing 5-phospho-ribosyl-N-formylglycinamide (FGAR). Formate is provided by PurU via hydrolysis of 10-formyl-tetrahydrofolate. This chain is Formate-dependent phosphoribosylglycinamide formyltransferase, found in Bordetella parapertussis (strain 12822 / ATCC BAA-587 / NCTC 13253).